A 59-amino-acid polypeptide reads, in one-letter code: UPF0291 protein CPR_1073 (59 aa).

A disordered region spans residues 1 to 30 (MNIDELTKRINELHKKHKEEGLSEDEHKER).

This sequence belongs to the UPF0291 family.

It is found in the cytoplasm. The sequence is that of UPF0291 protein CPR_1073 from Clostridium perfringens (strain SM101 / Type A).